The chain runs to 306 residues: Nucleotide-binding protein MUL_1815 (306 aa).

29–36 (GLSGAGRG) is an ATP binding site. A GTP-binding site is contributed by 80 to 83 (DVRS).

It belongs to the RapZ-like family.

Its function is as follows. Displays ATPase and GTPase activities. The sequence is that of Nucleotide-binding protein MUL_1815 from Mycobacterium ulcerans (strain Agy99).